A 504-amino-acid chain; its full sequence is Immunoglobulin-binding protein EibC (504 aa).

The N-terminal stretch at 1 to 26 (MSKKFTMTLLSSSLAGLLVMSGGVSA) is a signal peptide. Residues 27 to 413 (QEEKYTVPYA…IAANTRTLQQ (387 aa)) are surface exposed passenger domain. The Extracellular portion of the chain corresponds to 27–453 (QEEKYTVPYA…GLFQPYSVGK (427 aa)). A head domain region spans residues 154–280 (DAKASGEFSV…TGTESDKTYG (127 aa)). Residues 281–296 (TRVLGGLSDGTRNSDA) are neck. The right-handed coiled-coil (RHcc) stretch occupies residues 297–342 (ATVGQLNRKVGGVYDDVKARITVESEKQKKYTDQKTSEVNEKVEAR). Positions 343-368 (TTVGVDSDGKLTRAEGATKTIAVNDG) are saddle domain. Residues 369-434 (LVALSGRTDR…INENHKEMKR (66 aa)) form a left-handed coiled-coil (LHcc) region. Positions 411 to 438 (LQQHSARLDSQQRQINENHKEMKRAAAQ) form a coiled coil. The interval 411–453 (LQQHSARLDSQQRQINENHKEMKRAAAQSAALTGLFQPYSVGK) is outer membrane translocation of the passenger domain. 4 beta stranded membrane-spanning segments follow: residues 454–464 (FNATAAVGGYS), 467–478 (QALAVGVGYRFN), 481–490 (TAAKAGVAFS), and 494–504 (ASWNVGVNFEF). A translocator domain region spans residues 454–504 (FNATAAVGGYSDQQALAVGVGYRFNEQTAAKAGVAFSDGDASWNVGVNFEF).

The protein belongs to the autotransporter-2 (AT-2) (TC 1.B.40) family. Eib subfamily. As to quaternary structure, homotrimer; can probably form mixed heterotrimers in vivo. Will form mixed heterotrimers with EibD; these are correctly located in the outer membrane and bind IgG Fc, although less well than homotrimers. In denaturing gels runs as a band of about 200 kDa. Binds the Fc portion of immunoglobulins; binds more than 1 Fc per subunit.

Its subcellular location is the cell surface. The protein localises to the cell outer membrane. Functionally, binds (in a non-immune fashion) to the Fc portion of human IgG and less well to IgA; binding occurs on the cell surface. Confers the ability to survive exposure to human serum exposure. Binds to the Fc portion of human IgG and IgA and to whole mouse antibodies also via Fc. This Escherichia coli protein is Immunoglobulin-binding protein EibC.